The primary structure comprises 509 residues: Maturase K (509 aa).

It belongs to the intron maturase 2 family. MatK subfamily.

The protein resides in the plastid. The protein localises to the chloroplast. Its function is as follows. Usually encoded in the trnK tRNA gene intron. Probably assists in splicing its own and other chloroplast group II introns. The chain is Maturase K from Clematis vitalba (Evergreen clematis).